The chain runs to 354 residues: CX3C chemokine receptor 1 (354 aa).

Topologically, residues 1–32 (MPTSFPELDLENFEYDDSAEACYLGDIVAFGT) are extracellular. Residues 33–60 (IFLSIFYSLVFTFGLVGNLLVVLALTNS) traverse the membrane as a helical segment. Topologically, residues 61 to 70 (RKSKSITDIY) are cytoplasmic. The chain crosses the membrane as a helical span at residues 71–91 (LLNLALSDLLFVATLPFWTHY). The Extracellular portion of the chain corresponds to 92–104 (LISHEGLHNAMCK). A disulfide bond links cysteine 103 and cysteine 176. The chain crosses the membrane as a helical span at residues 105–126 (LTTAFFFIGFFGGIFFITVISI). The Cytoplasmic portion of the chain corresponds to 127 to 143 (DRYLAIVLAANSMNNRT). Residues 144 to 168 (VQHGVTISLGVWAAAILVASPQFMF) traverse the membrane as a helical segment. Residues 169 to 196 (TKRKDNECLGDYPEVLQEIWPVLRNSEV) are Extracellular-facing. Residues 197–216 (NILGFVLPLLIMSFCYFRIV) traverse the membrane as a helical segment. Residues 217–232 (RTLFSCKNRKKARAIR) are Cytoplasmic-facing. Residues 233–257 (LILLVVVVFFLFWTPYNIVIFLETL) form a helical membrane-spanning segment. Residues 258 to 274 (KFYNFFPSCGMKRDLRW) lie on the Extracellular side of the membrane. A helical transmembrane segment spans residues 275-298 (ALSVTETVAFSHCCLNPFIYAFAG). Over 299-354 (EKFRRYLRHLYNKCLAVLCGRPVHAGFSTESQRSRQDSILSSLTHYTSEGEGSLLL) the chain is Cytoplasmic. A Phosphothreonine modification is found at threonine 345.

It belongs to the G-protein coupled receptor 1 family. In terms of assembly, found in a ternary complex with CX3CL1 and ITGAV:ITGB3 or ITGA4:ITGB1. In terms of processing, this protein is not N-glycosylated which is unusual for G-protein-coupled receptors. In terms of tissue distribution, most abundant in adult spinal cord, brain, kidney, gut, uterus and testes.

It localises to the cell membrane. Functionally, receptor for the C-X3-C chemokine fractalkine (CX3CL1) present on many early leukocyte cells; CX3CR1-CX3CL1 signaling exerts distinct functions in different tissue compartments, such as immune response, inflammation, cell adhesion and chemotaxis. CX3CR1-CX3CL1 signaling mediates cell migratory functions. Responsible for the recruitment of natural killer (NK) cells to inflamed tissues. Acts as a regulator of inflammation process leading to atherogenesis by mediating macrophage and monocyte recruitment to inflamed atherosclerotic plaques, promoting cell survival. Involved in airway inflammation by promoting interleukin 2-producing T helper (Th2) cell survival in inflamed lung. Involved in the migration of circulating monocytes to non-inflamed tissues, where they differentiate into macrophages and dendritic cells. Acts as a negative regulator of angiogenesis, probably by promoting macrophage chemotaxis. Plays a key role in brain microglia by regulating inflammatory response in the central nervous system (CNS) and regulating synapse maturation. Required to restrain the microglial inflammatory response in the CNS and the resulting parenchymal damage in response to pathological stimuli. Involved in brain development by participating in synaptic pruning, a natural process during which brain microglia eliminates extra synapses during postnatal development. Synaptic pruning by microglia is required to promote the maturation of circuit connectivity during brain development. Acts as an important regulator of the gut microbiota by controlling immunity to intestinal bacteria and fungi. Expressed in lamina propria dendritic cells in the small intestine, which form transepithelial dendrites capable of taking up bacteria in order to provide defense against pathogenic bacteria. Required to initiate innate and adaptive immune responses against dissemination of commensal fungi (mycobiota) component of the gut: expressed in mononuclear phagocytes (MNPs) and acts by promoting induction of antifungal IgG antibodies response to confer protection against disseminated C.albicans or C.auris infection. Also acts as a receptor for C-C motif chemokine CCL26, inducing cell chemotaxis. This Rattus norvegicus (Rat) protein is CX3C chemokine receptor 1.